A 224-amino-acid polypeptide reads, in one-letter code: N-(5'-phosphoribosyl)anthranilate isomerase (224 aa).

The protein belongs to the TrpF family.

The catalysed reaction is N-(5-phospho-beta-D-ribosyl)anthranilate = 1-(2-carboxyphenylamino)-1-deoxy-D-ribulose 5-phosphate. It participates in amino-acid biosynthesis; L-tryptophan biosynthesis; L-tryptophan from chorismate: step 3/5. This is N-(5'-phosphoribosyl)anthranilate isomerase from Allorhizobium ampelinum (strain ATCC BAA-846 / DSM 112012 / S4) (Agrobacterium vitis (strain S4)).